We begin with the raw amino-acid sequence, 185 residues long: Large ribosomal subunit protein uL5c (185 aa).

Belongs to the universal ribosomal protein uL5 family. In terms of assembly, part of the 50S ribosomal subunit; contacts the 5S rRNA.

The protein resides in the plastid. The protein localises to the chloroplast. Binds 5S rRNA, forms part of the central protuberance of the 50S subunit. The chain is Large ribosomal subunit protein uL5c (rpl5) from Chlorokybus atmophyticus (Soil alga).